The sequence spans 128 residues: Small ribosomal subunit protein bS16 (128 aa).

Positions 107–128 (AAEAKAAAANESDDSGTDSTES) are disordered. Acidic residues predominate over residues 117–128 (ESDDSGTDSTES).

Belongs to the bacterial ribosomal protein bS16 family.

This Synechococcus sp. (strain CC9311) protein is Small ribosomal subunit protein bS16.